The primary structure comprises 256 residues: Imidazole glycerol phosphate synthase subunit HisF (256 aa).

Active-site residues include D12 and D131.

Belongs to the HisA/HisF family. Heterodimer of HisH and HisF.

The protein localises to the cytoplasm. It catalyses the reaction 5-[(5-phospho-1-deoxy-D-ribulos-1-ylimino)methylamino]-1-(5-phospho-beta-D-ribosyl)imidazole-4-carboxamide + L-glutamine = D-erythro-1-(imidazol-4-yl)glycerol 3-phosphate + 5-amino-1-(5-phospho-beta-D-ribosyl)imidazole-4-carboxamide + L-glutamate + H(+). The protein operates within amino-acid biosynthesis; L-histidine biosynthesis; L-histidine from 5-phospho-alpha-D-ribose 1-diphosphate: step 5/9. Its function is as follows. IGPS catalyzes the conversion of PRFAR and glutamine to IGP, AICAR and glutamate. The HisF subunit catalyzes the cyclization activity that produces IGP and AICAR from PRFAR using the ammonia provided by the HisH subunit. In Pseudomonas entomophila (strain L48), this protein is Imidazole glycerol phosphate synthase subunit HisF.